The chain runs to 121 residues: Large ribosomal subunit protein uL14c (121 aa).

This sequence belongs to the universal ribosomal protein uL14 family. As to quaternary structure, part of the 50S ribosomal subunit.

The protein localises to the plastid. The protein resides in the chloroplast. Functionally, binds to 23S rRNA. This is Large ribosomal subunit protein uL14c from Trieres chinensis (Marine centric diatom).